The chain runs to 220 residues: Cytidylate kinase (220 aa).

Position 11 to 19 (11 to 19) interacts with ATP; the sequence is GPTASGKGT.

The protein belongs to the cytidylate kinase family. Type 1 subfamily.

The protein resides in the cytoplasm. It catalyses the reaction CMP + ATP = CDP + ADP. The catalysed reaction is dCMP + ATP = dCDP + ADP. The polypeptide is Cytidylate kinase (Polynucleobacter asymbioticus (strain DSM 18221 / CIP 109841 / QLW-P1DMWA-1) (Polynucleobacter necessarius subsp. asymbioticus)).